The following is a 268-amino-acid chain: tRNA (guanine-N(7)-)-methyltransferase (268 aa).

Positions 1 to 21 (MMAGAEAPQPQKRYYRQRAHS) are disordered. Ser-21 carries the phosphoserine modification. S-adenosyl-L-methionine-binding residues include Gly-78, Glu-101, Arg-103, Asn-134, Ala-135, and Leu-154. Asp-157 is an active-site residue. The interval 158-166 (PHFKRTKHK) is alphaC helix. S-adenosyl-L-methionine-binding residues include Thr-232 and Glu-234. The segment at 232–240 (TEEGKKVLR) is alpha6 helix.

Belongs to the class I-like SAM-binding methyltransferase superfamily. TrmB family. In terms of assembly, catalytic component of the METTL1-WDR4 complex, composed of METTL1 and WDR4. Phosphorylation at Ser-21 by PKB/AKT1 inactivates its methyltransferase activity via a steric interference mechanism in the active site that locally disrupts the catalytic center. Phosphorylation at Ser-21 does not affect the interaction with WDR4.

The protein localises to the nucleus. It catalyses the reaction guanosine(46) in tRNA + S-adenosyl-L-methionine = N(7)-methylguanosine(46) in tRNA + S-adenosyl-L-homocysteine. The enzyme catalyses a guanosine in mRNA + S-adenosyl-L-methionine = an N(7)-methylguanosine in mRNA + S-adenosyl-L-homocysteine. The catalysed reaction is a guanosine in miRNA + S-adenosyl-L-methionine = an N(7)-methylguanosine in miRNA + S-adenosyl-L-homocysteine. The protein operates within tRNA modification; N(7)-methylguanine-tRNA biosynthesis. Catalytic component of METTL1-WDR4 methyltransferase complex that mediates the formation of N(7)-methylguanine in a subset of RNA species, such as tRNAs, mRNAs and microRNAs (miRNAs). Catalyzes the formation of N(7)-methylguanine at position 46 (m7G46) in a large subset of tRNAs that contain the 5'-RAGGU-3' motif within the variable loop. M7G46 interacts with C13-G22 in the D-loop to stabilize tRNA tertiary structure and protect tRNAs from decay. Also acts as a methyltransferase for a subset of internal N(7)-methylguanine in mRNAs. Internal N(7)-methylguanine methylation of mRNAs in response to stress promotes their relocalization to stress granules, thereby suppressing their translation. Also methylates a specific subset of miRNAs, such as let-7. N(7)-methylguanine methylation of let-7 miRNA promotes let-7 miRNA processing by disrupting an inhibitory secondary structure within the primary miRNA transcript (pri-miRNA). Acts as a regulator of embryonic stem cell self-renewal and differentiation. This is tRNA (guanine-N(7)-)-methyltransferase from Mus musculus (Mouse).